Reading from the N-terminus, the 285-residue chain is Nucleotide-binding protein FMG_1084 (285 aa).

8–15 (GMSGAGKS) serves as a coordination point for ATP. GTP is bound at residue 59 to 62 (DIRG).

It belongs to the RapZ-like family.

Displays ATPase and GTPase activities. This chain is Nucleotide-binding protein FMG_1084, found in Finegoldia magna (strain ATCC 29328 / DSM 20472 / WAL 2508) (Peptostreptococcus magnus).